The chain runs to 721 residues: Polyribonucleotide nucleotidyltransferase (721 aa).

The Mg(2+) site is built by Asp511 and Asp517. In terms of domain architecture, KH spans 577-637; sequence PSTDFFHINP…SGVQAAREHI (61 aa). The S1 motif domain occupies 654–721; the sequence is GDIHKGIVKK…KGNKISLGIA (68 aa).

It belongs to the polyribonucleotide nucleotidyltransferase family. The cofactor is Mg(2+).

Its subcellular location is the cytoplasm. It catalyses the reaction RNA(n+1) + phosphate = RNA(n) + a ribonucleoside 5'-diphosphate. Functionally, involved in mRNA degradation. Catalyzes the phosphorolysis of single-stranded polyribonucleotides processively in the 3'- to 5'-direction. This is Polyribonucleotide nucleotidyltransferase from Sulfurimonas denitrificans (strain ATCC 33889 / DSM 1251) (Thiomicrospira denitrificans (strain ATCC 33889 / DSM 1251)).